Reading from the N-terminus, the 752-residue chain is Putative xanthine dehydrogenase molybdenum-binding subunit XdhA (752 aa).

Residues Q206, F237, R350, and A516 each contribute to the Mo-molybdopterin site.

Belongs to the xanthine dehydrogenase family. In terms of assembly, heterotrimer of XdhA, XdhB and XdhC. Mo-molybdopterin serves as cofactor.

It carries out the reaction xanthine + NAD(+) + H2O = urate + NADH + H(+). It catalyses the reaction hypoxanthine + NAD(+) + H2O = xanthine + NADH + H(+). It participates in purine metabolism; hypoxanthine degradation; urate from hypoxanthine: step 1/2. It functions in the pathway purine metabolism; hypoxanthine degradation; urate from hypoxanthine: step 2/2. Presumed to be a dehydrogenase, but possibly an oxidase. Participates in limited purine salvage (requires aspartate) but does not support aerobic growth on purines as the sole carbon source (purine catabolism). Deletion results in increased adenine sensitivity, suggesting that this protein contributes to the conversion of adenine to guanine nucleotides during purine salvage. This chain is Putative xanthine dehydrogenase molybdenum-binding subunit XdhA (xdhA), found in Escherichia coli (strain K12).